The primary structure comprises 139 residues: Translation initiation factor 2 subunit beta (139 aa).

It belongs to the eIF-2-beta/eIF-5 family. Heterotrimer composed of an alpha, a beta and a gamma chain.

In terms of biological role, eIF-2 functions in the early steps of protein synthesis by forming a ternary complex with GTP and initiator tRNA. The polypeptide is Translation initiation factor 2 subunit beta (Methanococcus aeolicus (strain ATCC BAA-1280 / DSM 17508 / OCM 812 / Nankai-3)).